The following is a 215-amino-acid chain: Chaperone protein TorD (215 aa).

Belongs to the TorD/DmsD family. TorD subfamily.

The protein resides in the cytoplasm. Functionally, involved in the biogenesis of TorA. Acts on TorA before the insertion of the molybdenum cofactor and, as a result, probably favors a conformation of the apoenzyme that is competent for acquiring the cofactor. The polypeptide is Chaperone protein TorD (Vibrio parahaemolyticus serotype O3:K6 (strain RIMD 2210633)).